The chain runs to 72 residues: Small ribosomal subunit protein bS20 (72 aa).

This sequence belongs to the bacterial ribosomal protein bS20 family.

Its function is as follows. Binds directly to 16S ribosomal RNA. The polypeptide is Small ribosomal subunit protein bS20 (rpsT) (Aeromonas salmonicida).